Here is a 535-residue protein sequence, read N- to C-terminus: Light-independent protochlorophyllide reductase subunit B (535 aa).

[4Fe-4S] cluster is bound at residue aspartate 36. The active-site Proton donor is the aspartate 292. 428–429 (GL) is a binding site for substrate.

It belongs to the ChlB/BchB/BchZ family. Protochlorophyllide reductase is composed of three subunits; BchL, BchN and BchB. Forms a heterotetramer of two BchB and two BchN subunits. The cofactor is [4Fe-4S] cluster.

It catalyses the reaction chlorophyllide a + oxidized 2[4Fe-4S]-[ferredoxin] + 2 ADP + 2 phosphate = protochlorophyllide a + reduced 2[4Fe-4S]-[ferredoxin] + 2 ATP + 2 H2O. Its pathway is porphyrin-containing compound metabolism; bacteriochlorophyll biosynthesis (light-independent). In terms of biological role, component of the dark-operative protochlorophyllide reductase (DPOR) that uses Mg-ATP and reduced ferredoxin to reduce ring D of protochlorophyllide (Pchlide) to form chlorophyllide a (Chlide). This reaction is light-independent. The NB-protein (BchN-BchB) is the catalytic component of the complex. This is Light-independent protochlorophyllide reductase subunit B from Pelodictyon phaeoclathratiforme (strain DSM 5477 / BU-1).